Consider the following 610-residue polypeptide: Glutamine--fructose-6-phosphate aminotransferase [isomerizing] (610 aa).

Cys2 functions as the Nucleophile; for GATase activity in the catalytic mechanism. The 218-residue stretch at 2–219 (CGIVGYAGKK…SGEWGYFSQN (218 aa)) folds into the Glutamine amidotransferase type-2 domain. 2 SIS domains span residues 287–431 (SKDV…SDEE) and 459–600 (MSSH…PDQP). Lys605 acts as the For Fru-6P isomerization activity in catalysis.

Homodimer.

The protein localises to the cytoplasm. The enzyme catalyses D-fructose 6-phosphate + L-glutamine = D-glucosamine 6-phosphate + L-glutamate. Catalyzes the first step in hexosamine metabolism, converting fructose-6P into glucosamine-6P using glutamine as a nitrogen source. The chain is Glutamine--fructose-6-phosphate aminotransferase [isomerizing] from Leptospira interrogans serogroup Icterohaemorrhagiae serovar copenhageni (strain Fiocruz L1-130).